A 375-amino-acid chain; its full sequence is Eukaryotic translation initiation factor 3 subunit M (375 aa).

Residues 180–339 form the PCI domain; sequence AAAKVMVELL…RKVVVSHSTH (160 aa).

This sequence belongs to the eIF-3 subunit M family. As to quaternary structure, component of the eukaryotic translation initiation factor 3 (eIF-3) complex, which is composed of 13 subunits: eif3a, eif3b, eif3c, eif3d, eif3e, eif3f, eif3g, eif3h, eif3i, eif3j, eif3k, eif3l and eif3m.

The protein localises to the cytoplasm. Functionally, component of the eukaryotic translation initiation factor 3 (eIF-3) complex, which is involved in protein synthesis of a specialized repertoire of mRNAs and, together with other initiation factors, stimulates binding of mRNA and methionyl-tRNAi to the 40S ribosome. The eIF-3 complex specifically targets and initiates translation of a subset of mRNAs involved in cell proliferation. The polypeptide is Eukaryotic translation initiation factor 3 subunit M (eif3m) (Danio rerio (Zebrafish)).